The sequence spans 31 residues: Palustrin-2a (31 aa).

Cys-23 and Cys-29 are oxidised to a cystine.

As to expression, expressed by the skin glands.

Its subcellular location is the secreted. In terms of biological role, antimicrobial activity against Gram-negative bacterium E.coli. This Lithobates palustris (Pickerel frog) protein is Palustrin-2a.